The sequence spans 259 residues: Putative cysteine-rich repeat secretory protein 25 (259 aa).

Residues Met1–Ser31 form the signal peptide. Gnk2-homologous domains lie at Ala37 to Thr138 and Tyr144 to Phe256.

This sequence belongs to the cysteine-rich repeat secretory protein family.

The protein localises to the secreted. This is Putative cysteine-rich repeat secretory protein 25 (CRRSP25) from Arabidopsis thaliana (Mouse-ear cress).